The chain runs to 353 residues: Rhodopsin (353 aa).

The Extracellular portion of the chain corresponds to Met-1 to Lys-36. Asn-2 and Asn-15 each carry an N-linked (GlcNAc...) asparagine glycan. Residues Tyr-37–Val-61 form a helical membrane-spanning segment. Residues Thr-62–Asn-73 lie on the Cytoplasmic side of the membrane. Residues Tyr-74–Tyr-96 traverse the membrane as a helical segment. The Extracellular segment spans residues Thr-97–Cys-110. Cys-110 and Cys-187 are oxidised to a cystine. Residues Ser-111 to Ile-133 form a helical membrane-spanning segment. Positions Glu-134–Tyr-136 match the 'Ionic lock' involved in activated form stabilization motif. Over Glu-134 to His-152 the chain is Cytoplasmic. The chain crosses the membrane as a helical span at residues Ala-153–Val-173. The Extracellular portion of the chain corresponds to Gly-174–Ser-202. Residues Tyr-203–Gly-224 form a helical membrane-spanning segment. Over Arg-225 to Arg-252 the chain is Cytoplasmic. A helical membrane pass occupies residues Met-253–Tyr-274. Over Ile-275–Thr-286 the chain is Extracellular. The helical transmembrane segment at Phe-287–Leu-308 threads the bilayer. Residue Lys-296 is modified to N6-(retinylidene)lysine. Topologically, residues Met-309–Ala-353 are cytoplasmic. The interval Asp-330–Ala-353 is disordered. Low complexity predominate over residues Ser-336–Ala-353.

It belongs to the G-protein coupled receptor 1 family. Opsin subfamily. In terms of processing, phosphorylated on some or all of the serine and threonine residues present in the C-terminal region. Post-translationally, contains one covalently linked retinal chromophore. Short photoreceptor cells.

Its subcellular location is the membrane. It localises to the cell projection. The protein localises to the cilium. It is found in the photoreceptor outer segment. Its function is as follows. Photoreceptor required for image-forming vision at low light intensity. While most salt water fish species use retinal as chromophore, most freshwater fish use 3-dehydroretinal, or a mixture of retinal and 3-dehydroretinal. Light-induced isomerization of 11-cis to all-trans retinal triggers a conformational change that activates signaling via G-proteins. Subsequent receptor phosphorylation mediates displacement of the bound G-protein alpha subunit by arrestin and terminates signaling. The protein is Rhodopsin (RHO) of Lethenteron camtschaticum (Japanese lamprey).